The chain runs to 305 residues: UDP-3-O-acyl-N-acetylglucosamine deacetylase (305 aa).

3 residues coordinate Zn(2+): His-79, His-238, and Asp-242. His-265 serves as the catalytic Proton donor.

Belongs to the LpxC family. Zn(2+) serves as cofactor.

It carries out the reaction a UDP-3-O-[(3R)-3-hydroxyacyl]-N-acetyl-alpha-D-glucosamine + H2O = a UDP-3-O-[(3R)-3-hydroxyacyl]-alpha-D-glucosamine + acetate. The protein operates within glycolipid biosynthesis; lipid IV(A) biosynthesis; lipid IV(A) from (3R)-3-hydroxytetradecanoyl-[acyl-carrier-protein] and UDP-N-acetyl-alpha-D-glucosamine: step 2/6. Functionally, catalyzes the hydrolysis of UDP-3-O-myristoyl-N-acetylglucosamine to form UDP-3-O-myristoylglucosamine and acetate, the committed step in lipid A biosynthesis. In Salmonella arizonae (strain ATCC BAA-731 / CDC346-86 / RSK2980), this protein is UDP-3-O-acyl-N-acetylglucosamine deacetylase.